A 611-amino-acid chain; its full sequence is Chaperone protein DnaK (611 aa).

A Phosphothreonine; by autocatalysis modification is found at T173. Disordered regions lie at residues 525 to 548 (DNISEEDKSNAESKKDALKSALEG) and 573 to 611 (YQQAQQAQQQAQDGAQQTQNDSNVEDAEFKEVNDDEDKK). The segment covering 529-542 (EEDKSNAESKKDAL) has biased composition (basic and acidic residues). Residues 574–591 (QQAQQAQQQAQDGAQQTQ) show a composition bias toward low complexity. Basic and acidic residues predominate over residues 599–611 (AEFKEVNDDEDKK).

It belongs to the heat shock protein 70 family.

Its function is as follows. Acts as a chaperone. The chain is Chaperone protein DnaK from Staphylococcus haemolyticus (strain JCSC1435).